The chain runs to 261 residues: Cytochrome c oxidase subunit 3 (261 aa).

At 1–15 the chain is on the mitochondrial matrix side; it reads MTHQTHAYHMVNPSP. A helical membrane pass occupies residues 16–34; it reads WPLTGALSALLMTSGLAMW. Over 35–40 the chain is Mitochondrial intermembrane; that stretch reads FHFNSV. A helical membrane pass occupies residues 41-66; that stretch reads TLLTLGLTTNMLTMYQWWRDIIREST. Residues 67 to 72 are Mitochondrial matrix-facing; that stretch reads FQGHHT. The chain crosses the membrane as a helical span at residues 73 to 105; the sequence is PTVQKGLRYGMILFIISEVLFFTGFFWAFYHSS. At 106 to 128 the chain is on the mitochondrial intermembrane side; that stretch reads LAPTPELGGCWPPTGISPLNPLE. The chain crosses the membrane as a helical span at residues 129 to 152; it reads VPLLNTSVLLASGVSITWAHHSLM. The Mitochondrial matrix portion of the chain corresponds to 153–155; it reads EGN. A helical membrane pass occupies residues 156-183; that stretch reads RNHMLQALFITIALGVYFTLLQASEYYE. The Mitochondrial intermembrane segment spans residues 184-190; it reads APFTISD. The chain crosses the membrane as a helical span at residues 191–223; it reads GIYGSTFFVATGFHGLHVIIGSTFLIVCFFRQL. Topologically, residues 224-232 are mitochondrial matrix; sequence KFHFTSNHH. A helical membrane pass occupies residues 233–256; sequence FGFEAAAWYWHFVDVVWLFLYVSI. The Mitochondrial intermembrane segment spans residues 257 to 261; the sequence is YWWGS.

This sequence belongs to the cytochrome c oxidase subunit 3 family. In terms of assembly, component of the cytochrome c oxidase (complex IV, CIV), a multisubunit enzyme composed of 14 subunits. The complex is composed of a catalytic core of 3 subunits MT-CO1, MT-CO2 and MT-CO3, encoded in the mitochondrial DNA, and 11 supernumerary subunits COX4I, COX5A, COX5B, COX6A, COX6B, COX6C, COX7A, COX7B, COX7C, COX8 and NDUFA4, which are encoded in the nuclear genome. The complex exists as a monomer or a dimer and forms supercomplexes (SCs) in the inner mitochondrial membrane with NADH-ubiquinone oxidoreductase (complex I, CI) and ubiquinol-cytochrome c oxidoreductase (cytochrome b-c1 complex, complex III, CIII), resulting in different assemblies (supercomplex SCI(1)III(2)IV(1) and megacomplex MCI(2)III(2)IV(2)).

Its subcellular location is the mitochondrion inner membrane. It carries out the reaction 4 Fe(II)-[cytochrome c] + O2 + 8 H(+)(in) = 4 Fe(III)-[cytochrome c] + 2 H2O + 4 H(+)(out). Component of the cytochrome c oxidase, the last enzyme in the mitochondrial electron transport chain which drives oxidative phosphorylation. The respiratory chain contains 3 multisubunit complexes succinate dehydrogenase (complex II, CII), ubiquinol-cytochrome c oxidoreductase (cytochrome b-c1 complex, complex III, CIII) and cytochrome c oxidase (complex IV, CIV), that cooperate to transfer electrons derived from NADH and succinate to molecular oxygen, creating an electrochemical gradient over the inner membrane that drives transmembrane transport and the ATP synthase. Cytochrome c oxidase is the component of the respiratory chain that catalyzes the reduction of oxygen to water. Electrons originating from reduced cytochrome c in the intermembrane space (IMS) are transferred via the dinuclear copper A center (CU(A)) of subunit 2 and heme A of subunit 1 to the active site in subunit 1, a binuclear center (BNC) formed by heme A3 and copper B (CU(B)). The BNC reduces molecular oxygen to 2 water molecules using 4 electrons from cytochrome c in the IMS and 4 protons from the mitochondrial matrix. This Neotragus moschatus (Suni) protein is Cytochrome c oxidase subunit 3 (MT-CO3).